A 937-amino-acid polypeptide reads, in one-letter code: Hyphally-regulated protein (937 aa).

An N-terminal signal peptide occupies residues 1–20; it reads MKVVSNFIFTILLTLNLSAA. N-linked (GlcNAc...) asparagine glycosylation occurs at Asn-16. A helical transmembrane segment spans residues 42–62; it reads VHSGATWAILGTTLCSFFGGL. Asn-236 is a glycosylation site (N-linked (GlcNAc...) asparagine). The segment at 332-483 is disordered; that stretch reads SAPESESDLN…QSITSSPGQS (152 aa). Residues 344–392 show a composition bias toward low complexity; sequence TTSSIETSSYSSAATESSVVSESSSAVDSLTSSSLSSKSESSDVVSSTT. Polar residues predominate over residues 393–414; it reads NIESSSTAIETTMNSESSTDAG. Low complexity predominate over residues 415–475; that stretch reads SSSISQSESS…SNALSSTEQS (61 aa). Residues Asn-449, Asn-488, Asn-580, Asn-585, Asn-595, and Asn-603 are each glycosylated (N-linked (GlcNAc...) asparagine). Residues 567 to 590 are compositionally biased toward low complexity; sequence DATTTTTTSTGGDNSTGGNESGSN. The disordered stretch occupies residues 567 to 857; the sequence is DATTTTTTST…VANPVTTSTE (291 aa). A compositionally biased stretch (gly residues) spans 591-609; that stretch reads HGPGNGSTEGSGNGSGAGS. Residues 610–613 form repeat 1; it reads NEGS. Residues 610–753 are 7 X 4 AA repeats of N-E-G-S; that stretch reads NEGSQSGPNN…GAGNGSNEGS (144 aa). N-linked (GlcNAc...) asparagine glycans are attached at residues Asn-619, Asn-631, Asn-641, and Asn-649. 2 stretches are compositionally biased toward gly residues: residues 619–631 and 641–665; these read NGSG…GSNN and NGSG…GSGS. Repeat copies occupy residues 666–669, 680–683, 690–693, and 698–701. The segment covering 666–682 has biased composition (low complexity); sequence NEGSQSGSGSQPGPNEG. A compositionally biased stretch (gly residues) spans 699 to 725; the sequence is EGSGSGSGSGSNNGSGSGSQSGSGSGS. Residue Asn-711 is glycosylated (N-linked (GlcNAc...) asparagine). The span at 726–742 shows a compositional bias: low complexity; it reads QSGSESGSNSGSNEGSN. Repeat 6 spans residues 738 to 741; that stretch reads NEGS. The segment covering 743–801 has biased composition (gly residues); that stretch reads PGAGNGSNEGSGQGSGNGSEAGSGQGSGPNNGSGSGHNDGSGSGSNQGSNPGAGSGSGS. Residue Asn-747 is glycosylated (N-linked (GlcNAc...) asparagine). Repeat unit 7 spans residues 750-753; the sequence is NEGS. 2 N-linked (GlcNAc...) asparagine glycosylation sites follow: Asn-759 and Asn-773. The segment covering 802-814 has biased composition (low complexity); sequence ESGSKAGSHSGSN. The span at 817–829 shows a compositional bias: basic and acidic residues; that stretch reads AKTDSIEGFHTES. The span at 841–851 shows a compositional bias: polar residues; it reads ATVTGNSVANP. Asn-897 and Asn-913 each carry an N-linked (GlcNAc...) asparagine glycan. Asn-913 carries the GPI-anchor amidated asparagine lipid modification. A propeptide spans 914 to 937 (removed in mature form); that stretch reads GSSIVTGGKSILFGLIVSMVVLFM.

Its subcellular location is the cell membrane. The protein localises to the secreted. It localises to the cell wall. In terms of biological role, nonessential component of the hyphal cell wall. This Candida albicans (Yeast) protein is Hyphally-regulated protein (HYR1).